The following is a 714-amino-acid chain: Penicillin-binding protein 1F (714 aa).

At 1–12 the chain is on the cytoplasmic side; it reads MFKIKKKKLFIP. Residues 13–33 traverse the membrane as a helical; Signal-anchor for type II membrane protein segment; that stretch reads IIILVLTAFLALIGYISIIFL. Residues 34 to 714 lie on the Extracellular side of the membrane; that stretch reads GHYVIDEKKL…DYVQPKLFSS (681 aa). A transglycosylase region spans residues 49 to 217; the sequence is SKIVDQNGDE…STYSPILHPD (169 aa). E87 (proton donor; for transglycosylase activity) is an active-site residue. Positions 297 to 592 are transpeptidase; that stretch reads SKLQKTAYQV…SSYPTRLFKD (296 aa). S359 serves as the catalytic Acyl-ester intermediate; for transpeptidase activity.

This sequence in the N-terminal section; belongs to the glycosyltransferase 51 family. The protein in the C-terminal section; belongs to the transpeptidase family.

Its subcellular location is the cell membrane. The catalysed reaction is [GlcNAc-(1-&gt;4)-Mur2Ac(oyl-L-Ala-gamma-D-Glu-L-Lys-D-Ala-D-Ala)](n)-di-trans,octa-cis-undecaprenyl diphosphate + beta-D-GlcNAc-(1-&gt;4)-Mur2Ac(oyl-L-Ala-gamma-D-Glu-L-Lys-D-Ala-D-Ala)-di-trans,octa-cis-undecaprenyl diphosphate = [GlcNAc-(1-&gt;4)-Mur2Ac(oyl-L-Ala-gamma-D-Glu-L-Lys-D-Ala-D-Ala)](n+1)-di-trans,octa-cis-undecaprenyl diphosphate + di-trans,octa-cis-undecaprenyl diphosphate + H(+). The enzyme catalyses Preferential cleavage: (Ac)2-L-Lys-D-Ala-|-D-Ala. Also transpeptidation of peptidyl-alanyl moieties that are N-acyl substituents of D-alanine.. The protein operates within cell wall biogenesis; peptidoglycan biosynthesis. Functionally, cell wall formation. May be involved in outgrowth of the germinated spore or it could function in the synthesis of the germ cell wall. The sequence is that of Penicillin-binding protein 1F (pbpF) from Bacillus subtilis (strain 168).